Reading from the N-terminus, the 123-residue chain is Hydrogenase maturation factor HypA (123 aa).

His2 provides a ligand contact to Ni(2+). Zn(2+) is bound by residues Cys73, Cys76, Cys90, and Cys93.

The protein belongs to the HypA/HybF family.

Functionally, involved in the maturation of [NiFe] hydrogenases. Required for nickel insertion into the metal center of the hydrogenase. The chain is Hydrogenase maturation factor HypA from Roseiflexus sp. (strain RS-1).